Here is a 55-residue protein sequence, read N- to C-terminus: MAKDKDVRPIIKLKSTAGTGHTYVTRKNRRNDPDRLVLKKYDPRIRQHVEFREER.

Belongs to the bacterial ribosomal protein bL33 family.

This Renibacterium salmoninarum (strain ATCC 33209 / DSM 20767 / JCM 11484 / NBRC 15589 / NCIMB 2235) protein is Large ribosomal subunit protein bL33.